The primary structure comprises 446 residues: Maltoporin (446 aa).

The first 25 residues, 1-25 (MMITLRKLPLAVAVAAGVMSAQAMA), serve as a signal peptide directing secretion.

It belongs to the porin LamB (TC 1.B.3) family. In terms of assembly, homotrimer formed of three 18-stranded antiparallel beta-barrels, containing three independent channels.

It is found in the cell outer membrane. It catalyses the reaction beta-maltose(in) = beta-maltose(out). Functionally, involved in the transport of maltose and maltodextrins. This is Maltoporin from Escherichia coli (strain K12 / MC4100 / BW2952).